A 119-amino-acid chain; its full sequence is Anamorsin homolog (119 aa).

Residues 1–15 (MSSSATSTQAFSLKT) are compositionally biased toward polar residues. Disordered regions lie at residues 1-21 (MSSS…PIPD) and 33-119 (LKQA…TDDV). Residues Cys-42, Cys-49, Cys-52, and Cys-54 each coordinate [2Fe-2S] cluster. The segment at 42–54 (CTTRRRACKNCVC) is fe-S binding site A. 4 residues coordinate [4Fe-4S] cluster: Cys-81, Cys-84, Cys-92, and Cys-95. Short sequence motifs (cx2C motif) lie at residues 81-84 (CGNC) and 92-95 (CANC). Positions 81–95 (CGNCSKGDAFRCANC) are fe-S binding site B.

Belongs to the anamorsin family. In terms of assembly, monomer. [2Fe-2S] cluster serves as cofactor. The cofactor is [4Fe-4S] cluster.

Its subcellular location is the cytoplasm. It localises to the mitochondrion intermembrane space. Component of the cytosolic iron-sulfur (Fe-S) protein assembly (CIA) machinery. Required for the maturation of extramitochondrial Fe-S proteins. Part of an electron transfer chain functioning in an early step of cytosolic Fe-S biogenesis, facilitating the de novo assembly of a [4Fe-4S] cluster on the cytosolic Fe-S scaffold complex. Electrons are transferred from NADPH via a FAD- and FMN-containing diflavin oxidoreductase. Together with the diflavin oxidoreductase, also required for the assembly of the diferric tyrosyl radical cofactor of ribonucleotide reductase (RNR), probably by providing electrons for reduction during radical cofactor maturation in the catalytic small subunit. In Leishmania infantum, this protein is Anamorsin homolog.